Here is a 212-residue protein sequence, read N- to C-terminus: Dephospho-CoA kinase (212 aa).

Residues Leu-8–Arg-212 form the DPCK domain. Position 16–21 (Gly-16–Met-21) interacts with ATP.

It belongs to the CoaE family.

The protein localises to the cytoplasm. It carries out the reaction 3'-dephospho-CoA + ATP = ADP + CoA + H(+). It participates in cofactor biosynthesis; coenzyme A biosynthesis; CoA from (R)-pantothenate: step 5/5. Its function is as follows. Catalyzes the phosphorylation of the 3'-hydroxyl group of dephosphocoenzyme A to form coenzyme A. In Chlorobium chlorochromatii (strain CaD3), this protein is Dephospho-CoA kinase.